The sequence spans 535 residues: 5,6-dihydroxyindole-2-carboxylic acid oxidase (535 aa).

An N-terminal signal peptide occupies residues 1 to 23 (MQLPMLLLVSLPLLLNMFKPAEA). The Lumenal, melanosome segment spans residues 24–478 (QFPRQCATIE…GPLRVTEMIT (455 aa)). Intrachain disulfides connect cysteine 29–cysteine 40, cysteine 41–cysteine 64, cysteine 55–cysteine 98, cysteine 100–cysteine 109, and cysteine 112–cysteine 121. N-linked (GlcNAc...) asparagine glycans are attached at residues asparagine 95 and asparagine 103. Asparagine 180 carries N-linked (GlcNAc...) asparagine glycosylation. Residues histidine 191, histidine 214, and histidine 223 each coordinate Zn(2+). 2 disulfide bridges follow: cysteine 257/cysteine 260 and cysteine 289/cysteine 302. Residues asparagine 303 and asparagine 349 are each glycosylated (N-linked (GlcNAc...) asparagine). The Zn(2+) site is built by histidine 376 and histidine 380. N-linked (GlcNAc...) asparagine glycosylation occurs at asparagine 384. Histidine 403 is a binding site for Zn(2+). The chain crosses the membrane as a helical span at residues 479-499 (IAIVTALVLVAIIFAAAACIV). Over 500–535 (RAKKNRDELHQPLLTDQYQHYSDDYDGIATPSQSVV) the chain is Cytoplasmic.

The protein belongs to the tyrosinase family. Tyrosinase, TYRP1 and TYRP2 may form a multienzyme complex. Cu(2+) is required as a cofactor. It depends on Zn(2+) as a cofactor.

The protein localises to the melanosome membrane. It catalyses the reaction 2 5,6-dihydroxyindole-2-carboxylate + O2 = 2 indole-5,6-quinone-2-carboxylate + 2 H2O. It participates in pigment biosynthesis; melanin biosynthesis. Plays a role in melanin biosynthesis. Catalyzes the oxidation of 5,6-dihydroxyindole-2-carboxylic acid (DHICA) into indole-5,6-quinone-2-carboxylic acid. May regulate or influence the type of melanin synthesized. Also to a lower extent, capable of hydroxylating tyrosine and producing melanin. The sequence is that of 5,6-dihydroxyindole-2-carboxylic acid oxidase (TYRP1) from Gallus gallus (Chicken).